Reading from the N-terminus, the 506-residue chain is Glutamate--tRNA ligase (506 aa).

Residues 12 to 22 (PSPTGDPHVGT) carry the 'HIGH' region motif. Positions 253–257 (KLSKR) match the 'KMSKS' region motif. Residue K256 coordinates ATP.

The protein belongs to the class-I aminoacyl-tRNA synthetase family. Glutamate--tRNA ligase type 1 subfamily. As to quaternary structure, monomer.

It localises to the cytoplasm. It catalyses the reaction tRNA(Glu) + L-glutamate + ATP = L-glutamyl-tRNA(Glu) + AMP + diphosphate. Its function is as follows. Catalyzes the attachment of glutamate to tRNA(Glu) in a two-step reaction: glutamate is first activated by ATP to form Glu-AMP and then transferred to the acceptor end of tRNA(Glu). This Chlamydia trachomatis serovar L2 (strain ATCC VR-902B / DSM 19102 / 434/Bu) protein is Glutamate--tRNA ligase.